We begin with the raw amino-acid sequence, 166 residues long: Protein C (166 aa).

The disordered stretch occupies residues 17–42 (YKRHTDDQASNNQVPKTGQEHGRTSC).

May counteract the cellular interferon antiviral system. This is Protein C (P/V/C) from Hendra virus (isolate Horse/Autralia/Hendra/1994).